Reading from the N-terminus, the 233-residue chain is Large ribosomal subunit protein uL1 (233 aa).

The protein belongs to the universal ribosomal protein uL1 family. In terms of assembly, part of the 50S ribosomal subunit.

In terms of biological role, binds directly to 23S rRNA. The L1 stalk is quite mobile in the ribosome, and is involved in E site tRNA release. Its function is as follows. Protein L1 is also a translational repressor protein, it controls the translation of the L11 operon by binding to its mRNA. The sequence is that of Large ribosomal subunit protein uL1 from Geotalea uraniireducens (strain Rf4) (Geobacter uraniireducens).